A 196-amino-acid polypeptide reads, in one-letter code: Dehydrogenase RED3 (196 aa).

The NADP(+) site is built by serine 47, aspartate 74, asparagine 101, arginine 134, tyrosine 166, and lysine 170. Residue tyrosine 166 is the Proton acceptor of the active site. Residue lysine 170 is the Lowers pKa of active site Tyr of the active site.

The protein belongs to the short-chain dehydrogenases/reductases (SDR) family.

It carries out the reaction a primary alcohol + NAD(+) = an aldehyde + NADH + H(+). It catalyses the reaction a secondary alcohol + NAD(+) = a ketone + NADH + H(+). It functions in the pathway mycotoxin biosynthesis. Functionally, dehydrogenase; part of the Tox1B locus, one of the 2 loci that mediate the biosynthesis of T-toxin, a family of linear polyketides 37 to 45 carbons in length, of which the major component is 41 carbons, and which leads to high virulence to maize. One of the PKSs (PKS1 or PKS2) could synthesize a precursor, used subsequently by the other PKS as starter unit, to add additional carbons. Variability in the length of the final carbon backbone C35-47 could be achieved by varying the number of condensation cycles, or use of different starter or extender units or might be due to decarboxylation of the penultimate product, catalyzed by DEC1. Additional proteins are required for the biosynthesis of T-toxin, including oxidoreductases RED1, RED2, RED3, LAM1 and OXI1, as well as esterase TOX9. This is Dehydrogenase RED3 from Cochliobolus heterostrophus (strain C4 / ATCC 48331 / race T) (Southern corn leaf blight fungus).